Here is a 344-residue protein sequence, read N- to C-terminus: UDP-3-O-acylglucosamine N-acyltransferase (344 aa).

His250 acts as the Proton acceptor in catalysis.

This sequence belongs to the transferase hexapeptide repeat family. LpxD subfamily. Homotrimer.

It carries out the reaction a UDP-3-O-[(3R)-3-hydroxyacyl]-alpha-D-glucosamine + a (3R)-hydroxyacyl-[ACP] = a UDP-2-N,3-O-bis[(3R)-3-hydroxyacyl]-alpha-D-glucosamine + holo-[ACP] + H(+). Its pathway is bacterial outer membrane biogenesis; LPS lipid A biosynthesis. Functionally, catalyzes the N-acylation of UDP-3-O-acylglucosamine using 3-hydroxyacyl-ACP as the acyl donor. Is involved in the biosynthesis of lipid A, a phosphorylated glycolipid that anchors the lipopolysaccharide to the outer membrane of the cell. The chain is UDP-3-O-acylglucosamine N-acyltransferase from Maricaulis maris (strain MCS10) (Caulobacter maris).